A 518-amino-acid polypeptide reads, in one-letter code: Nitrogenase iron-iron protein alpha chain (518 aa).

Positions 49, 75, and 138 each coordinate [8Fe-7S] cluster. Residues C257 and H423 each coordinate [8Fe-9S-C-homocitryl] cluster.

This sequence belongs to the NifD/NifK/NifE/NifN family. In terms of assembly, hexamer of two alpha, two beta, and two delta chains. [8Fe-7S] cluster serves as cofactor. The cofactor is [8Fe-9S-C-homocitryl] cluster.

The catalysed reaction is N2 + 8 reduced [2Fe-2S]-[ferredoxin] + 16 ATP + 16 H2O = H2 + 8 oxidized [2Fe-2S]-[ferredoxin] + 2 NH4(+) + 16 ADP + 16 phosphate + 6 H(+). Functionally, this iron-iron protein is part of the nitrogenase complex that catalyzes the key enzymatic reactions in nitrogen fixation. Other nitrogenase complexes utilize a molybdenum-iron protein or a vanadium-iron protein. The polypeptide is Nitrogenase iron-iron protein alpha chain (anfD) (Azotobacter vinelandii).